We begin with the raw amino-acid sequence, 300 residues long: Nucleotide-binding protein Daci_5422 (300 aa).

Gly-10 to Ser-17 serves as a coordination point for ATP. Asp-59–Ser-62 lines the GTP pocket.

This sequence belongs to the RapZ-like family.

Displays ATPase and GTPase activities. This chain is Nucleotide-binding protein Daci_5422, found in Delftia acidovorans (strain DSM 14801 / SPH-1).